A 114-amino-acid polypeptide reads, in one-letter code: Notch-regulated ankyrin repeat-containing protein (114 aa).

ANK repeat units follow at residues 50 to 79 (EGQT…DIRL) and 83 to 112 (DGWS…YAAS).

It belongs to the NRARP family. As to quaternary structure, interacts with LEF1.

Downstream effector of Notch signaling. Involved in the regulation of liver cancer cells self-renewal. Involved in angiogenesis acting downstream of Notch at branch points to regulate vascular density. Proposed to integrate endothelial Notch and Wnt signaling to control stalk cell proliferation and to stablilize new endothelial connections during angiogenesis. During somitogenesis involved in maintenance of proper somite segmentation and proper numbers of somites and vertebrae. Required for proper anterior-posterior somite patterning. Proposed to function in a negative feedback loop to destabilize Notch 1 intracellular domain (NICD) and down-regulate the Notch signal, preventing expansion of the Notch signal into the anterior somite domain. This chain is Notch-regulated ankyrin repeat-containing protein (NRARP), found in Homo sapiens (Human).